The sequence spans 185 residues: Ribosome-recycling factor (185 aa).

Residues 137 to 158 are disordered; it reads NQVKKLEKDKEISEDESKKAQE. The segment covering 140–158 has biased composition (basic and acidic residues); the sequence is KKLEKDKEISEDESKKAQE.

The protein belongs to the RRF family.

The protein localises to the cytoplasm. In terms of biological role, responsible for the release of ribosomes from messenger RNA at the termination of protein biosynthesis. May increase the efficiency of translation by recycling ribosomes from one round of translation to another. This is Ribosome-recycling factor from Helicobacter pylori (strain P12).